The primary structure comprises 333 residues: Protein VTE6, chloroplastic (333 aa).

A chloroplast-targeting transit peptide spans 1–65 (MATISSTLLL…SRADGATAAA (65 aa)). 6 helical membrane passes run 94–114 (LLIFVLGSPLLVTGLSASGIA), 126–146 (AYGSAGFLLVAAYFVIGTAAT), 171–191 (VIGSSAAGCVCAFLSIYQVGG), 248–268 (TLAGLLASFFLASVGCFLGQI), 274–294 (AVCVLASQIANLGESIIGASF), and 307–327 (VVNVINISLGSIVAILMQQFI).

The protein belongs to the TMEM19 family.

The protein resides in the plastid. The protein localises to the chloroplast membrane. The enzyme catalyses phytyl phosphate + a ribonucleoside 5'-triphosphate = phytyl diphosphate + a ribonucleoside 5'-diphosphate. It catalyses the reaction phytyl phosphate + CTP = phytyl diphosphate + CDP. It functions in the pathway cofactor biosynthesis; tocopherol biosynthesis. Its function is as follows. Phytyl-phosphate kinase catalyzing the conversion of phytyl-monophosphate to phytyl-diphosphate. Involved in the activation and reutilization of phytol from chlorophyll degradation in plant metabolism, including tocopherol (vitamin E) biosynthesis. Involved in the biosynthesis of phylloquinone (vitamin K), which is required for the photosystem I (PSI) complex stability. The chain is Protein VTE6, chloroplastic from Arabidopsis thaliana (Mouse-ear cress).